We begin with the raw amino-acid sequence, 216 residues long: Ras-related protein Rab-11A (216 aa).

An N-acetylglycine modification is found at Gly2. GTP contacts are provided by Ser20, Gly21, Val22, Gly23, Lys24, Ser25, Asn26, Asn37, Leu38, Ser40, Ser42, and Thr43. Residue Ser25 coordinates Mg(2+). The short motif at Phe36–Glu47 is the Switch 1 element. Thr43 and Asp66 together coordinate Mg(2+). A Switch 2 motif is present at residues Thr67–Gly86. Residues Gly69, Asn124, Lys125, Asp127, Ala155, and Leu156 each contribute to the GTP site. Positions Asp183–Pro208 are disordered. Residues Cys212 and Cys213 are each lipidated (S-geranylgeranyl cysteine). The residue at position 213 (Cys213) is a Cysteine methyl ester. A propeptide spans Gln214–Ile216 (removed in mature form).

This sequence belongs to the small GTPase superfamily. Rab family. Mg(2+) serves as cofactor.

It is found in the cell membrane. It localises to the endosome membrane. The protein resides in the recycling endosome membrane. The protein localises to the cleavage furrow. Its subcellular location is the cytoplasmic vesicle. It is found in the phagosome. It localises to the cytoplasmic vesicle membrane. The protein resides in the golgi apparatus. The protein localises to the trans-Golgi network. The enzyme catalyses GTP + H2O = GDP + phosphate + H(+). Its activity is regulated as follows. Regulated by guanine nucleotide exchange factors (GEFs) which promote the exchange of bound GDP for free GTP. Regulated by GTPase activating proteins (GAPs) which increase the GTP hydrolysis activity. Inhibited by GDP dissociation inhibitors (GDIs) which prevent Rab-GDP dissociation. Its function is as follows. The small GTPases Rab are key regulators of intracellular membrane trafficking, from the formation of transport vesicles to their fusion with membranes. Rabs cycle between an inactive GDP-bound form and an active GTP-bound form that is able to recruit to membranes different set of downstream effectors directly responsible for vesicle formation, movement, tethering and fusion. The small Rab GTPase RAB11A regulates endocytic recycling. May also be involved in the regulation of preciliary trafficking and neosynthesized protein export. The sequence is that of Ras-related protein Rab-11A (RAB11A) from Gallus gallus (Chicken).